The primary structure comprises 874 residues: S-layer protein (874 aa).

Residues 1–30 form the signal peptide; the sequence is MAKTNSYKKVIAGTMTAAMVAGVVSPVAAA. SLH domains follow at residues 31 to 93, 94 to 151, and 152 to 214; these read GKSF…NAQP, SFKD…KVDG, and TLVT…ENSD.

The protein resides in the secreted. Its subcellular location is the cell wall. The protein localises to the S-layer. In terms of biological role, the S-layer is a paracrystalline mono-layered assembly of proteins which coat the surface of bacteria. The sequence is that of S-layer protein from Bacillus licheniformis.